A 29-amino-acid polypeptide reads, in one-letter code: Toxin TdII-3 (29 aa).

An LCN-type CS-alpha/beta domain is found at 1–29 (KDGYLVGTDGCKYGCFTRPGHFCANEECL).

The protein belongs to the long (4 C-C) scorpion toxin superfamily. Sodium channel inhibitor family. Beta subfamily. In terms of tissue distribution, expressed by the venom gland.

The protein resides in the secreted. In terms of biological role, binds voltage-independently to sodium channels (Nav) and shifts the voltage of activation toward more negative potentials. This toxin is active against mammals and also affects neuromuscular preparations of frog. The protein is Toxin TdII-3 of Tityus discrepans (Venezuelan scorpion).